Reading from the N-terminus, the 237-residue chain is tRNA (guanine-N(7)-)-methyltransferase (237 aa).

S-adenosyl-L-methionine-binding residues include E68, E93, D120, and D143. D143 is a catalytic residue. Residues K147, D179, and T216–E219 contribute to the substrate site.

Belongs to the class I-like SAM-binding methyltransferase superfamily. TrmB family.

It catalyses the reaction guanosine(46) in tRNA + S-adenosyl-L-methionine = N(7)-methylguanosine(46) in tRNA + S-adenosyl-L-homocysteine. The protein operates within tRNA modification; N(7)-methylguanine-tRNA biosynthesis. Catalyzes the formation of N(7)-methylguanine at position 46 (m7G46) in tRNA. The polypeptide is tRNA (guanine-N(7)-)-methyltransferase (Shewanella halifaxensis (strain HAW-EB4)).